A 249-amino-acid polypeptide reads, in one-letter code: Glycoprotein 2a (249 aa).

The signal sequence occupies residues 1 to 35 (MQWGHCGVKSASCSWTPSLSSLLVWLILPFSLPYC). At 36 to 207 (LGSPSQDGYW…LTDFRQWLIS (172 aa)) the chain is on the virion surface side. Asn173 and Asn179 each carry an N-linked (GlcNAc...) asparagine; by host glycan. The chain crosses the membrane as a helical span at residues 208–228 (VHASIFSSVASSVTLFIVLWL). At 229-249 (RIPALRYVFGFHWPTATHHSS) the chain is on the intravirion side.

As to quaternary structure, heterotrimer of GP2a, GP3, and GP4. The GP2a-GP3-GP4 complex associates with the E protein. Interacts with host CD163; this interaction plays a role in virus entry into host cell.

The protein localises to the virion membrane. It localises to the host endoplasmic reticulum membrane. The protein resides in the host Golgi apparatus membrane. It is found in the secreted. In terms of biological role, minor envelope protein. Along with GP4, serves as the viral attachment protein responsible for mediating interactions with CD163 thereby playing a role in virus entry into susceptible host cells. The sequence is that of Glycoprotein 2a (GP2a) from Porcine reproductive and respiratory syndrome virus (strain Lelystad) (PRRSV).